A 416-amino-acid chain; its full sequence is Glutamyl-tRNA reductase (416 aa).

Substrate-binding positions include 51 to 54 (TCNR), S110, 115 to 117 (EPQ), and Q121. C52 serves as the catalytic Nucleophile. NADP(+) is bound at residue 190–195 (GAGQTG).

The protein belongs to the glutamyl-tRNA reductase family. As to quaternary structure, homodimer.

The enzyme catalyses (S)-4-amino-5-oxopentanoate + tRNA(Glu) + NADP(+) = L-glutamyl-tRNA(Glu) + NADPH + H(+). Its pathway is porphyrin-containing compound metabolism; protoporphyrin-IX biosynthesis; 5-aminolevulinate from L-glutamyl-tRNA(Glu): step 1/2. In terms of biological role, catalyzes the NADPH-dependent reduction of glutamyl-tRNA(Glu) to glutamate 1-semialdehyde (GSA). The polypeptide is Glutamyl-tRNA reductase (Francisella tularensis subsp. tularensis (strain FSC 198)).